Reading from the N-terminus, the 82-residue chain is Small ribosomal subunit protein bS16 (82 aa).

It belongs to the bacterial ribosomal protein bS16 family.

This Blochmanniella floridana protein is Small ribosomal subunit protein bS16.